Reading from the N-terminus, the 640-residue chain is Tyrosine--tRNA ligase, mitochondrial (640 aa).

Y100 contributes to the L-tyrosine binding site. D104 provides a ligand contact to ATP. A 'HIGH' region motif is present at residues 105–114 (PTAPSLHIGH). L-tyrosine is bound by residues D144, Y248, Q252, D255, and Q274. Residues 322 to 326 (KFGKS) carry the 'KMSKS' region motif. K325 contacts ATP.

Belongs to the class-I aminoacyl-tRNA synthetase family.

It is found in the mitochondrion matrix. It catalyses the reaction tRNA(Tyr) + L-tyrosine + ATP = L-tyrosyl-tRNA(Tyr) + AMP + diphosphate + H(+). Its function is as follows. Has both an aminoacyl-tRNA synthetase activity and is involved in the splicing of group I introns. The sequence is that of Tyrosine--tRNA ligase, mitochondrial (YTS1) from Podospora anserina (Pleurage anserina).